The chain runs to 423 residues: Levansucrase (423 aa).

Residues tryptophan 47, aspartate 48, serine 119, arginine 193, and aspartate 194 each contribute to the sucrose site. Aspartate 48 serves as the catalytic Nucleophile. Glutamate 278 (proton donor/acceptor) is an active-site residue.

Belongs to the glycosyl hydrolase 68 family.

Its subcellular location is the secreted. The catalysed reaction is [6)-beta-D-fructofuranosyl-(2-&gt;](n) alpha-D-glucopyranoside + sucrose = [6)-beta-D-fructofuranosyl-(2-&gt;](n+1) alpha-D-glucopyranoside + D-glucose. In terms of biological role, catalyzes the synthesis of levan, a fructose polymer, by transferring the fructosyl moiety from sucrose to a growing acceptor molecule. The polypeptide is Levansucrase (Zymomonas mobilis subsp. mobilis (strain ATCC 10988 / DSM 424 / LMG 404 / NCIMB 8938 / NRRL B-806 / ZM1)).